A 246-amino-acid polypeptide reads, in one-letter code: 1-(5-phosphoribosyl)-5-[(5-phosphoribosylamino)methylideneamino] imidazole-4-carboxamide isomerase (246 aa).

Asp-7 functions as the Proton acceptor in the catalytic mechanism. Asp-129 functions as the Proton donor in the catalytic mechanism.

This sequence belongs to the HisA/HisF family.

The protein localises to the cytoplasm. It catalyses the reaction 1-(5-phospho-beta-D-ribosyl)-5-[(5-phospho-beta-D-ribosylamino)methylideneamino]imidazole-4-carboxamide = 5-[(5-phospho-1-deoxy-D-ribulos-1-ylimino)methylamino]-1-(5-phospho-beta-D-ribosyl)imidazole-4-carboxamide. The protein operates within amino-acid biosynthesis; L-histidine biosynthesis; L-histidine from 5-phospho-alpha-D-ribose 1-diphosphate: step 4/9. The sequence is that of 1-(5-phosphoribosyl)-5-[(5-phosphoribosylamino)methylideneamino] imidazole-4-carboxamide isomerase from Shewanella sediminis (strain HAW-EB3).